The sequence spans 276 residues: Rhomboid protease GlpG (276 aa).

The next 6 helical transmembrane spans lie at 94–114 (GPVT…MQIL), 142–162 (ALMH…WYLG), 169–189 (LGSG…GYVQ), 192–212 (FSGP…GYVW), 229–249 (LIIF…GMSM), and 250–270 (ANGA…VDSL). The Nucleophile role is filled by Ser201. His254 is an active-site residue.

It belongs to the peptidase S54 family.

It is found in the cell inner membrane. The catalysed reaction is Cleaves type-1 transmembrane domains using a catalytic dyad composed of serine and histidine that are contributed by different transmembrane domains.. Its function is as follows. Rhomboid-type serine protease that catalyzes intramembrane proteolysis. This is Rhomboid protease GlpG from Escherichia coli O7:K1 (strain IAI39 / ExPEC).